A 108-amino-acid polypeptide reads, in one-letter code: Large ribosomal subunit protein bL21 (108 aa).

It belongs to the bacterial ribosomal protein bL21 family. As to quaternary structure, part of the 50S ribosomal subunit. Contacts protein L20.

This protein binds to 23S rRNA in the presence of protein L20. The chain is Large ribosomal subunit protein bL21 from Orientia tsutsugamushi (strain Ikeda) (Rickettsia tsutsugamushi).